We begin with the raw amino-acid sequence, 21 residues long: Peptidyl-prolyl cis-trans isomerase (21 aa).

Residues 1–21 form a disordered region; the sequence is ENFKIKHTEPGLLSMANAGKN.

It belongs to the cyclophilin-type PPIase family. PPIase A subfamily.

It catalyses the reaction [protein]-peptidylproline (omega=180) = [protein]-peptidylproline (omega=0). Its function is as follows. PPIases accelerate the folding of proteins. It catalyzes the cis-trans isomerization of proline imidic peptide bonds in oligopeptides. The sequence is that of Peptidyl-prolyl cis-trans isomerase from Naegleria fowleri (Brain eating amoeba).